Consider the following 466-residue polypeptide: Xanthine permease XanQ (466 aa).

Residues 1–44 (MSDINHAGSDLIFELEDRPPFHQALVGAITHLLAIFVPMVTPAL) lie on the Cytoplasmic side of the membrane. A helical membrane pass occupies residues 45-65 (IVGAALQLSAETTAYLVSMAM). Over 66 to 74 (IASGIGTWL) the chain is Periplasmic. A helical transmembrane segment spans residues 75-95 (QVNRYGIVGSGLLSIQSVNFS). At 96 to 99 (FVTV) the chain is on the cytoplasmic side. The helical transmembrane segment at 100-120 (MIALGSSMKSDGFHEELIMSS) threads the bilayer. The Periplasmic portion of the chain corresponds to 121 to 139 (LLGVSFVGAFLVVGSSFIL). The helical transmembrane segment at 140–160 (PYLRRVITPTVSGIVVLMIGL) threads the bilayer. Over 161–170 (SLIKVGIIDF) the chain is Cytoplasmic. A helical transmembrane segment spans residues 171–191 (GGGFAAKSSGTFGNYEHLGVG). The Periplasmic segment spans residues 192–199 (LLVLIVVI). The chain crosses the membrane as a helical span at residues 200–220 (GFNCCRSPLLRMGGIAIGLCV). The Cytoplasmic portion of the chain corresponds to 221 to 229 (GYIASLCLG). Residues 230–250 (MVDFSSMRNLPLITIPHPFKY) form a helical membrane-spanning segment. Residues 251–277 (GFSFSFHQFLVVGTIYLLSVLEAVGDI) are Periplasmic-facing. The helical transmembrane segment at 278-298 (TATAMVSRRPIQGEEYQSRLK) threads the bilayer. At 299-317 (GGVLADGLVSVIASAVGSL) the chain is on the cytoplasmic side. A helical membrane pass occupies residues 318–338 (PLTTFAQNNGVIQMTGVASRY). The Periplasmic segment spans residues 339–361 (VGRTIAVMLVILGLFPMIGGFFT). Residues 362–382 (TIPSAVLGGAMTLMFSMIAIA) traverse the membrane as a helical segment. Position 383 (glycine 383) is a topological domain, cytoplasmic. A helical transmembrane segment spans residues 384–403 (IRIIITNGLKRRETLIVATS). Topologically, residues 404–444 (LGLGLGVSYDPEIFKILPASIYVLVENPICAGGLTAILLNI) are periplasmic. The helical transmembrane segment at 445–465 (ILPGGYRQENVLPGITSAEEM) threads the bilayer. Position 466 (aspartate 466) is a topological domain, cytoplasmic.

Belongs to the nucleobase:cation symporter-2 (NCS2) (TC 2.A.40) family.

Its subcellular location is the cell inner membrane. The catalysed reaction is xanthine(in) + H(+)(in) = xanthine(out) + H(+)(out). Functionally, specific, proton motive force-dependent high-affinity transporter for xanthine. This is Xanthine permease XanQ (xanQ) from Escherichia coli O157:H7.